The following is a 471-amino-acid chain: MVNTATNTGFITQIIGPVIDIEFPNGKLPPIYNSVIVSDVTCEVQQLLGNNRVRAVSMTSTDGLKRGMEVTDLNAPISVPVGKSTLGRIFNVLGVPVDEMGEVSMETTLPIHRLSPRFTELETKPSIFETGIKVVDLLAPYRRGGKIGLFGGAGVGKTVLIMELINNIAKAHGGVSVFGGVGERTREGNDLYMEMKESGVINASNLSESKVALVYGQMNEPPGARMRVGLTALTMAEYFRDVNKQDVLLFIDNIFRFVQAGSEVSALLGRMPSAVGYQPTLATEMGTLQERITSTREGSITSIQAVYVPADDLTDPAPATTFSHLDATTVLSRNLAAKGIYPAVDPLDSTSTMLQINIVGSEHYDTAQDVKETLQRYKELQDIIAILGLDELSEEDRLTVARARKVERFLSQPFFVAEVFTGSPGKYVSLADTIKGFNMILNGELDELPEQAFYLVGNIDEAIEKANSLKG.

An ATP-binding site is contributed by 151–158 (GGAGVGKT).

The protein belongs to the ATPase alpha/beta chains family. As to quaternary structure, F-type ATPases have 2 components, CF(1) - the catalytic core - and CF(0) - the membrane proton channel. CF(1) has five subunits: alpha(3), beta(3), gamma(1), delta(1), epsilon(1). CF(0) has four main subunits: a(1), b(1), b'(1) and c(9-12).

It is found in the plastid. Its subcellular location is the chloroplast thylakoid membrane. It carries out the reaction ATP + H2O + 4 H(+)(in) = ADP + phosphate + 5 H(+)(out). Produces ATP from ADP in the presence of a proton gradient across the membrane. The catalytic sites are hosted primarily by the beta subunits. The sequence is that of ATP synthase subunit beta, chloroplastic from Rhodomonas salina (Cryptomonas salina).